Here is a 205-residue protein sequence, read N- to C-terminus: Holliday junction branch migration complex subunit RuvA (205 aa).

Residues 1–64 (MIGRLRGIIL…EDAQLLFGFI (64 aa)) form a domain I region. Residues 65–143 (HKQERVLFRE…GLSGDLFVPQ (79 aa)) are domain II. The segment at 144-156 (GAGEIPAAIDAPA) is flexible linker. A domain III region spans residues 157-205 (MPADPEGEAVAALVALGYKPQEASRMVSKVASAGSDCEMLIRDALRAAL).

The protein belongs to the RuvA family. In terms of assembly, homotetramer. Forms an RuvA(8)-RuvB(12)-Holliday junction (HJ) complex. HJ DNA is sandwiched between 2 RuvA tetramers; dsDNA enters through RuvA and exits via RuvB. An RuvB hexamer assembles on each DNA strand where it exits the tetramer. Each RuvB hexamer is contacted by two RuvA subunits (via domain III) on 2 adjacent RuvB subunits; this complex drives branch migration. In the full resolvosome a probable DNA-RuvA(4)-RuvB(12)-RuvC(2) complex forms which resolves the HJ.

It is found in the cytoplasm. In terms of biological role, the RuvA-RuvB-RuvC complex processes Holliday junction (HJ) DNA during genetic recombination and DNA repair, while the RuvA-RuvB complex plays an important role in the rescue of blocked DNA replication forks via replication fork reversal (RFR). RuvA specifically binds to HJ cruciform DNA, conferring on it an open structure. The RuvB hexamer acts as an ATP-dependent pump, pulling dsDNA into and through the RuvAB complex. HJ branch migration allows RuvC to scan DNA until it finds its consensus sequence, where it cleaves and resolves the cruciform DNA. The protein is Holliday junction branch migration complex subunit RuvA of Sodalis glossinidius (strain morsitans).